The following is a 605-amino-acid chain: Lysophospholipase 1 (605 aa).

The N-terminal stretch at 1-17 (MILHHLLILLIINYCVA) is a signal peptide. A PLA2c domain is found at 30–565 (SCPSSQLIRS…ENYCWDGTIY (536 aa)). 7 N-linked (GlcNAc...) asparagine glycosylation sites follow: asparagine 199, asparagine 261, asparagine 399, asparagine 451, asparagine 465, asparagine 492, and asparagine 573.

This sequence belongs to the lysophospholipase family.

The protein localises to the secreted. The catalysed reaction is a 1-acyl-sn-glycero-3-phosphocholine + H2O = sn-glycerol 3-phosphocholine + a fatty acid + H(+). Catalyzes the release of fatty acids from lysophospholipids. Phospholipase B may well contribute to pathogenicity by abetting the fungus in damaging and traversing host cell membranes, processes which likely increase the rapidity of disseminated infection. The chain is Lysophospholipase 1 from Candida albicans (strain SC5314 / ATCC MYA-2876) (Yeast).